Here is a 358-residue protein sequence, read N- to C-terminus: NADH-quinone oxidoreductase subunit H (358 aa).

8 helical membrane passes run 29–49, 95–115, 130–150, 176–196, 206–226, 258–280, 297–317, and 334–354; these read LIKI…LTLW, GLFY…WAVI, LLLV…AGWA, FCFL…IVAV, GLGF…VYLI, GFAI…AVVM, GWIW…WIRA, and IFIP…LSPW.

The protein belongs to the complex I subunit 1 family. In terms of assembly, NDH-1 is composed of 14 different subunits. Subunits NuoA, H, J, K, L, M, N constitute the membrane sector of the complex.

Its subcellular location is the cell inner membrane. It catalyses the reaction a quinone + NADH + 5 H(+)(in) = a quinol + NAD(+) + 4 H(+)(out). In terms of biological role, NDH-1 shuttles electrons from NADH, via FMN and iron-sulfur (Fe-S) centers, to quinones in the respiratory chain. The immediate electron acceptor for the enzyme in this species is believed to be ubiquinone. Couples the redox reaction to proton translocation (for every two electrons transferred, four hydrogen ions are translocated across the cytoplasmic membrane), and thus conserves the redox energy in a proton gradient. This subunit may bind ubiquinone. This chain is NADH-quinone oxidoreductase subunit H, found in Acidovorax sp. (strain JS42).